Here is a 709-residue protein sequence, read N- to C-terminus: Polyribonucleotide nucleotidyltransferase (709 aa).

D489 and D495 together coordinate Mg(2+). A KH domain is found at 556–615; sequence PKIDMIKIDVDKIKVVIGKGGETIDKIIAETGVKIDIDEEGNVSIFSSDQAAIDRTKDII. The region spanning 625 to 693 is the S1 motif domain; sequence GEVYHAKVVR…DKGRVDASMK (69 aa).

It belongs to the polyribonucleotide nucleotidyltransferase family. Mg(2+) serves as cofactor.

The protein resides in the cytoplasm. It catalyses the reaction RNA(n+1) + phosphate = RNA(n) + a ribonucleoside 5'-diphosphate. Functionally, involved in mRNA degradation. Catalyzes the phosphorolysis of single-stranded polyribonucleotides processively in the 3'- to 5'-direction. The protein is Polyribonucleotide nucleotidyltransferase of Streptococcus agalactiae serotype V (strain ATCC BAA-611 / 2603 V/R).